The chain runs to 162 residues: NADPH-dependent 7-cyano-7-deazaguanine reductase (162 aa).

Catalysis depends on Cys53, which acts as the Thioimide intermediate. Catalysis depends on Asp60, which acts as the Proton donor. Residues 75 to 77 and 94 to 95 each bind substrate; these read VES and HE.

This sequence belongs to the GTP cyclohydrolase I family. QueF type 1 subfamily.

It is found in the cytoplasm. It catalyses the reaction 7-aminomethyl-7-carbaguanine + 2 NADP(+) = 7-cyano-7-deazaguanine + 2 NADPH + 3 H(+). It functions in the pathway tRNA modification; tRNA-queuosine biosynthesis. Functionally, catalyzes the NADPH-dependent reduction of 7-cyano-7-deazaguanine (preQ0) to 7-aminomethyl-7-deazaguanine (preQ1). This chain is NADPH-dependent 7-cyano-7-deazaguanine reductase, found in Exiguobacterium sp. (strain ATCC BAA-1283 / AT1b).